Reading from the N-terminus, the 261-residue chain is Synaptophysin-like protein 1 (261 aa).

Residues 1–33 are Cytoplasmic-facing; sequence MASKANMVRQRFSRLSQRMSAFQINLNPLKEPL. Positions 28-239 constitute an MARVEL domain; the sequence is PLKEPLGFIK…NAWFVYKETS (212 aa). The helical transmembrane segment at 34-54 threads the bilayer; that stretch reads GFIKILEWFASIFAFATCGGF. The Vesicular segment spans residues 55–117; sequence KGKTEIQVNC…LIGDYSSSAQ (63 aa). 2 N-linked (GlcNAc...) asparagine glycosylation sites follow: asparagine 72 and asparagine 95. Residues 118 to 138 traverse the membrane as a helical segment; that stretch reads FYVTFAVFVFLYCIAALLLYV. The Cytoplasmic portion of the chain corresponds to 139-151; sequence GYTNLYRDSRKLP. A helical transmembrane segment spans residues 152-172; the sequence is MIDFIVTLVATFLWLVSSSAW. Residues 173 to 214 lie on the Vesicular side of the membrane; the sequence is AKALTDIKVATGHRIVEELEICNPESGVSCYFVSVTSMGSLN. Asparagine 214 carries N-linked (GlcNAc...) asparagine glycosylation. Residues 215-235 form a helical membrane-spanning segment; that stretch reads VSVIFGFLNMILWGGNAWFVY. The Cytoplasmic portion of the chain corresponds to 236–261; the sequence is KETSLHSPSNTSASHSQGGGPPTSGM. Residues 241–251 show a composition bias toward polar residues; that stretch reads HSPSNTSASHS. The segment at 241 to 261 is disordered; it reads HSPSNTSASHSQGGGPPTSGM. Over residues 252–261 the composition is skewed to gly residues; sequence QGGGPPTSGM.

Belongs to the synaptophysin/synaptobrevin family. Ubiquitously expressed.

The protein resides in the cytoplasmic vesicle membrane. The protein localises to the melanosome. The polypeptide is Synaptophysin-like protein 1 (Sypl1) (Mus musculus (Mouse)).